Consider the following 245-residue polypeptide: 4-hydroxy-tetrahydrodipicolinate reductase (245 aa).

NAD(+)-binding positions include 7–12 (GARGKV), 75–77 (GTT), and 102–105 (APNF). The active-site Proton donor/acceptor is His-132. His-133 provides a ligand contact to (S)-2,3,4,5-tetrahydrodipicolinate. The Proton donor role is filled by Lys-136. Position 142–143 (142–143 (GT)) interacts with (S)-2,3,4,5-tetrahydrodipicolinate.

It belongs to the DapB family.

The protein resides in the cytoplasm. It carries out the reaction (S)-2,3,4,5-tetrahydrodipicolinate + NAD(+) + H2O = (2S,4S)-4-hydroxy-2,3,4,5-tetrahydrodipicolinate + NADH + H(+). It catalyses the reaction (S)-2,3,4,5-tetrahydrodipicolinate + NADP(+) + H2O = (2S,4S)-4-hydroxy-2,3,4,5-tetrahydrodipicolinate + NADPH + H(+). The protein operates within amino-acid biosynthesis; L-lysine biosynthesis via DAP pathway; (S)-tetrahydrodipicolinate from L-aspartate: step 4/4. Its function is as follows. Catalyzes the conversion of 4-hydroxy-tetrahydrodipicolinate (HTPA) to tetrahydrodipicolinate. The protein is 4-hydroxy-tetrahydrodipicolinate reductase of Mycolicibacterium vanbaalenii (strain DSM 7251 / JCM 13017 / BCRC 16820 / KCTC 9966 / NRRL B-24157 / PYR-1) (Mycobacterium vanbaalenii).